We begin with the raw amino-acid sequence, 389 residues long: MTDAQIRSLIGRPPASGAWREGDPVADRLFASVGGVDLEAGGRIPSVRVAYETFGERDPDGGNAVLVLHALTGDSHLRGPAGPGQPTGGWWSGIVGPGLAIDTDRWFVVAPNMLGGCQGTTGPASLAPDGAEWGARFPFITIRDQVAVQAALADALGIDVWAAVVGGSMGGMQALEWGVGLPGRMRRLAILAAPAIASADQIALNSVQAEAIRMDPAYRDGDYFDAADGDGPHRGLALARRMALLNYRSPDELNQRFSRSWQSGISPMGDEGRYAVESYLDFHGNKFTRRFDATSYIRLIDAMSSHDVGRDRGGVEAALASVRAATLVVGIDSDRLFPVPDQRLVARHVPGSVDGGEVVVISSDYGHDGFLIENEAVGRALARLLDTPA.

The 309-residue stretch at 63–371 folds into the AB hydrolase-1 domain; it reads NAVLVLHALT…SSDYGHDGFL (309 aa). The active-site Nucleophile is Ser168. Residue Arg240 participates in substrate binding. Active-site residues include Asp334 and His367. Asp368 contacts substrate.

This sequence belongs to the AB hydrolase superfamily. MetX family. Homodimer.

It localises to the cytoplasm. The catalysed reaction is L-homoserine + acetyl-CoA = O-acetyl-L-homoserine + CoA. Its pathway is amino-acid biosynthesis; L-methionine biosynthesis via de novo pathway; O-acetyl-L-homoserine from L-homoserine: step 1/1. Functionally, transfers an acetyl group from acetyl-CoA to L-homoserine, forming acetyl-L-homoserine. The polypeptide is Homoserine O-acetyltransferase (Clavibacter michiganensis subsp. michiganensis (strain NCPPB 382)).